Reading from the N-terminus, the 601-residue chain is 1-deoxy-D-xylulose-5-phosphate synthase (601 aa).

Residues His-63 and 104–106 contribute to the thiamine diphosphate site; that span reads GHS. Asp-135 contacts Mg(2+). Thiamine diphosphate is bound by residues 136 to 137, Asn-164, Tyr-272, and Glu-353; that span reads GS. Residue Asn-164 coordinates Mg(2+).

The protein belongs to the transketolase family. DXPS subfamily. As to quaternary structure, homodimer. Mg(2+) serves as cofactor. Thiamine diphosphate is required as a cofactor.

It catalyses the reaction D-glyceraldehyde 3-phosphate + pyruvate + H(+) = 1-deoxy-D-xylulose 5-phosphate + CO2. It functions in the pathway metabolic intermediate biosynthesis; 1-deoxy-D-xylulose 5-phosphate biosynthesis; 1-deoxy-D-xylulose 5-phosphate from D-glyceraldehyde 3-phosphate and pyruvate: step 1/1. Its function is as follows. Catalyzes the acyloin condensation reaction between C atoms 2 and 3 of pyruvate and glyceraldehyde 3-phosphate to yield 1-deoxy-D-xylulose-5-phosphate (DXP). This chain is 1-deoxy-D-xylulose-5-phosphate synthase, found in Aliarcobacter butzleri (strain RM4018) (Arcobacter butzleri).